We begin with the raw amino-acid sequence, 513 residues long: Cytochrome P450 705A1 (513 aa).

Residues 9 to 29 (QNCFIIILLCSFSLISYFVFF) traverse the membrane as a helical segment. Heme is bound at residue Cys448.

The protein belongs to the cytochrome P450 family. It depends on heme as a cofactor. Expressed in root stele, root cortex, root epidermis, root pericycle of the root hair zone, and quiescent center at the root meristematic zone.

Its subcellular location is the membrane. Cleaves the arabidiol side chain at C15 to form 14-apo-arabidiol and a side-chain fragment. Involved in the biosynthesis of the volatile homoterpene (E)-4,8-dimethyl-1,3,7-nonatriene (DMNT) in roots. Involved in the production of DMNT by degrading the triterpene arabidiol. May be involved in the defense again the fungal root pathogen Pythium irregulare by producing DMNT. This Arabidopsis thaliana (Mouse-ear cress) protein is Cytochrome P450 705A1.